Reading from the N-terminus, the 29-residue chain is U20-ctenitoxin-Co1a (29 aa).

Cystine bridges form between cysteine 3–cysteine 16 and cysteine 10–cysteine 21.

As to expression, expressed by the venom gland.

The protein resides in the secreted. The polypeptide is U20-ctenitoxin-Co1a (Ctenus ornatus (Brazilian spider)).